Reading from the N-terminus, the 139-residue chain is Large ribosomal subunit protein uL16 (139 aa).

This sequence belongs to the universal ribosomal protein uL16 family. Part of the 50S ribosomal subunit.

Functionally, binds 23S rRNA and is also seen to make contacts with the A and possibly P site tRNAs. This Rippkaea orientalis (strain PCC 8801 / RF-1) (Cyanothece sp. (strain PCC 8801)) protein is Large ribosomal subunit protein uL16.